Here is a 509-residue protein sequence, read N- to C-terminus: Probable malate:quinone oxidoreductase (509 aa).

The segment at 490 to 509 (LGLNEKEPVSGASEKELVYS) is disordered. Residues 493 to 509 (NEKEPVSGASEKELVYS) show a composition bias toward basic and acidic residues.

This sequence belongs to the MQO family. FAD serves as cofactor.

It carries out the reaction (S)-malate + a quinone = a quinol + oxaloacetate. The protein operates within carbohydrate metabolism; tricarboxylic acid cycle; oxaloacetate from (S)-malate (quinone route): step 1/1. The polypeptide is Probable malate:quinone oxidoreductase (Geobacillus sp. (strain WCH70)).